Here is a 33-residue protein sequence, read N- to C-terminus: MSDIN-like toxin proprotein 5 (33 aa).

A propeptide spanning residues 1 to 10 is cleaved from the precursor; that stretch reads MSDINATRLP. The cyclopeptide (Ile-Pro) cross-link spans 11–18; that stretch reads IFWFIYFP. Positions 19-32 are excised as a propeptide; the sequence is CVGDNVDNTLTRGE.

The protein belongs to the MSDIN fungal toxin family. Post-translationally, processed by the macrocyclase-peptidase enzyme POPB to yield a toxic cyclic octapeptide. POPB first removes 10 residues from the N-terminus. Conformational trapping of the remaining peptide forces the enzyme to release this intermediate rather than proceed to macrocyclization. The enzyme rebinds the remaining peptide in a different conformation and catalyzes macrocyclization of the N-terminal 8 residues.

Functionally, probable toxin that belongs to the MSDIN-like toxin family responsible for a large number of food poisoning cases and deaths. In Amanita phalloides (Death cap), this protein is MSDIN-like toxin proprotein 5.